We begin with the raw amino-acid sequence, 263 residues long: Indole-3-glycerol phosphate synthase (263 aa).

This sequence belongs to the TrpC family.

It catalyses the reaction 1-(2-carboxyphenylamino)-1-deoxy-D-ribulose 5-phosphate + H(+) = (1S,2R)-1-C-(indol-3-yl)glycerol 3-phosphate + CO2 + H2O. Its pathway is amino-acid biosynthesis; L-tryptophan biosynthesis; L-tryptophan from chorismate: step 4/5. This Laribacter hongkongensis (strain HLHK9) protein is Indole-3-glycerol phosphate synthase.